Reading from the N-terminus, the 213-residue chain is Uridine kinase (213 aa).

15 to 22 is a binding site for ATP; that stretch reads GASASGKS.

It belongs to the uridine kinase family.

The protein resides in the cytoplasm. It carries out the reaction uridine + ATP = UMP + ADP + H(+). The enzyme catalyses cytidine + ATP = CMP + ADP + H(+). Its pathway is pyrimidine metabolism; CTP biosynthesis via salvage pathway; CTP from cytidine: step 1/3. It participates in pyrimidine metabolism; UMP biosynthesis via salvage pathway; UMP from uridine: step 1/1. In Sodalis glossinidius (strain morsitans), this protein is Uridine kinase.